The sequence spans 251 residues: MKLRLSALALGTTLLVGCASSGTDQQGRSDPLEGFNRTMYNFNFNVLDPYIVRPVAVAWRDYVPQPARNGLSNFTGNLEEPAVMVNYFLQGDPYQGMVHFTRFFLNTILGMGGFIDVAGMANPKLQRTEPHRFGSTLGHYGVGYGPYVQLPFYGSFTLRDDGGDMADALYPVLSWLTWPMSVGKWTLEGIETRAQLLDSDGLLRQSSDPYIMVREAYFQRHDFIANGGELKPQENPNAQAIQDDLKDIDSE.

Residues 1 to 17 form the signal peptide; the sequence is MKLRLSALALGTTLLVG. The N-palmitoyl cysteine moiety is linked to residue cysteine 18. The S-diacylglycerol cysteine moiety is linked to residue cysteine 18. The segment at 228–251 is disordered; it reads GELKPQENPNAQAIQDDLKDIDSE.

This sequence belongs to the MlaA family.

It localises to the cell outer membrane. Its function is as follows. Involved in a phospholipid transport pathway that maintains lipid asymmetry in the outer membrane by retrograde trafficking of phospholipids from the outer membrane to the inner membrane. Required for intercellular spreading of S.flexneri. In Shigella flexneri, this protein is Intermembrane phospholipid transport system lipoprotein MlaA.